The primary structure comprises 104 residues: Replication restart protein PriB (104 aa).

An SSB domain is found at 1-101 (MTNRLALSGT…LHAEQIELID (101 aa)).

The protein belongs to the PriB family. As to quaternary structure, homodimer. Interacts with PriA and DnaT. Component of the replication restart primosome. Primosome assembly occurs via a 'hand-off' mechanism. PriA binds to replication forks, subsequently PriB then DnaT bind; DnaT then displaces ssDNA to generate the helicase loading substrate.

Functionally, involved in the restart of stalled replication forks, which reloads the replicative helicase on sites other than the origin of replication; the PriA-PriB pathway is the major replication restart pathway. During primosome assembly it facilitates complex formation between PriA and DnaT on DNA; stabilizes PriA on DNA. Stimulates the DNA unwinding activity of PriA helicase. In Citrobacter koseri (strain ATCC BAA-895 / CDC 4225-83 / SGSC4696), this protein is Replication restart protein PriB.